A 303-amino-acid polypeptide reads, in one-letter code: Lipoyl synthase (303 aa).

Positions 34, 39, 45, 60, 64, 67, and 273 each coordinate [4Fe-4S] cluster. Residues 46–262 (WSKKHATVMI…ERVARTKGFL (217 aa)) form the Radical SAM core domain.

It belongs to the radical SAM superfamily. Lipoyl synthase family. The cofactor is [4Fe-4S] cluster.

The protein localises to the cytoplasm. The enzyme catalyses [[Fe-S] cluster scaffold protein carrying a second [4Fe-4S](2+) cluster] + N(6)-octanoyl-L-lysyl-[protein] + 2 oxidized [2Fe-2S]-[ferredoxin] + 2 S-adenosyl-L-methionine + 4 H(+) = [[Fe-S] cluster scaffold protein] + N(6)-[(R)-dihydrolipoyl]-L-lysyl-[protein] + 4 Fe(3+) + 2 hydrogen sulfide + 2 5'-deoxyadenosine + 2 L-methionine + 2 reduced [2Fe-2S]-[ferredoxin]. The protein operates within protein modification; protein lipoylation via endogenous pathway; protein N(6)-(lipoyl)lysine from octanoyl-[acyl-carrier-protein]: step 2/2. Its function is as follows. Catalyzes the radical-mediated insertion of two sulfur atoms into the C-6 and C-8 positions of the octanoyl moiety bound to the lipoyl domains of lipoate-dependent enzymes, thereby converting the octanoylated domains into lipoylated derivatives. In Rickettsia bellii (strain OSU 85-389), this protein is Lipoyl synthase.